Consider the following 441-residue polypeptide: 3-phosphoshikimate 1-carboxyvinyltransferase (441 aa).

3 residues coordinate 3-phosphoshikimate: lysine 25, serine 26, and arginine 30. A phosphoenolpyruvate-binding site is contributed by lysine 25. Phosphoenolpyruvate-binding residues include glycine 97 and arginine 125. 3-phosphoshikimate-binding residues include serine 169, glutamine 170, aspartate 311, and lysine 338. Position 170 (glutamine 170) interacts with phosphoenolpyruvate. Residue aspartate 311 is the Proton acceptor of the active site. Residues arginine 342, arginine 383, and lysine 410 each contribute to the phosphoenolpyruvate site.

This sequence belongs to the EPSP synthase family. As to quaternary structure, monomer.

The protein resides in the cytoplasm. It catalyses the reaction 3-phosphoshikimate + phosphoenolpyruvate = 5-O-(1-carboxyvinyl)-3-phosphoshikimate + phosphate. It participates in metabolic intermediate biosynthesis; chorismate biosynthesis; chorismate from D-erythrose 4-phosphate and phosphoenolpyruvate: step 6/7. Its function is as follows. Catalyzes the transfer of the enolpyruvyl moiety of phosphoenolpyruvate (PEP) to the 5-hydroxyl of shikimate-3-phosphate (S3P) to produce enolpyruvyl shikimate-3-phosphate and inorganic phosphate. The chain is 3-phosphoshikimate 1-carboxyvinyltransferase from Chlamydia muridarum (strain MoPn / Nigg).